Consider the following 422-residue polypeptide: Serine--tRNA ligase (422 aa).

Position 229–231 (229–231) interacts with L-serine; it reads TAE. 260–262 contributes to the ATP binding site; sequence RKE. Glu283 lines the L-serine pocket. 347–350 contacts ATP; the sequence is EISS. Residue Ser383 participates in L-serine binding.

This sequence belongs to the class-II aminoacyl-tRNA synthetase family. Type-1 seryl-tRNA synthetase subfamily. As to quaternary structure, homodimer. The tRNA molecule binds across the dimer.

The protein resides in the cytoplasm. It carries out the reaction tRNA(Ser) + L-serine + ATP = L-seryl-tRNA(Ser) + AMP + diphosphate + H(+). The enzyme catalyses tRNA(Sec) + L-serine + ATP = L-seryl-tRNA(Sec) + AMP + diphosphate + H(+). Its pathway is aminoacyl-tRNA biosynthesis; selenocysteinyl-tRNA(Sec) biosynthesis; L-seryl-tRNA(Sec) from L-serine and tRNA(Sec): step 1/1. Its function is as follows. Catalyzes the attachment of serine to tRNA(Ser). Is also able to aminoacylate tRNA(Sec) with serine, to form the misacylated tRNA L-seryl-tRNA(Sec), which will be further converted into selenocysteinyl-tRNA(Sec). The polypeptide is Serine--tRNA ligase (Geobacter sp. (strain M21)).